The following is a 216-amino-acid chain: Octanoyltransferase (216 aa).

In terms of domain architecture, BPL/LPL catalytic spans 24–212 (KFRKECILFL…NLCSFLEPIN (189 aa)). Substrate contacts are provided by residues 69 to 76 (RGGDFTAH), 140 to 142 (SIG), and 153 to 155 (GIA). C171 functions as the Acyl-thioester intermediate in the catalytic mechanism.

It belongs to the LipB family.

The protein localises to the cytoplasm. It catalyses the reaction octanoyl-[ACP] + L-lysyl-[protein] = N(6)-octanoyl-L-lysyl-[protein] + holo-[ACP] + H(+). Its pathway is protein modification; protein lipoylation via endogenous pathway; protein N(6)-(lipoyl)lysine from octanoyl-[acyl-carrier-protein]: step 1/2. Its function is as follows. Catalyzes the transfer of endogenously produced octanoic acid from octanoyl-acyl-carrier-protein onto the lipoyl domains of lipoate-dependent enzymes. Lipoyl-ACP can also act as a substrate although octanoyl-ACP is likely to be the physiological substrate. This is Octanoyltransferase from Leptospira interrogans serogroup Icterohaemorrhagiae serovar copenhageni (strain Fiocruz L1-130).